Reading from the N-terminus, the 366-residue chain is Polyprenyl transferase AOL_s00215g276 (366 aa).

Residues 1-22 (MESIIARPRTRSSAKEKTQTMS) are disordered. The next 7 membrane-spanning stretches (helical) occupy residues 53 to 73 (LHTL…CLSA), 85 to 105 (FLSV…AFCT), 137 to 157 (IIAF…TLGF), 160 to 180 (ALVC…KRVV), 185 to 205 (LVLG…VAGN), 212 to 232 (AVPM…IYAT), and 253 to 273 (HMHQ…SFTA). N277 carries N-linked (GlcNAc...) asparagine glycosylation. Helical transmembrane passes span 281–301 (LFWS…LLSL) and 312–332 (VFLM…IELW). An N-linked (GlcNAc...) asparagine glycan is attached at N352.

It belongs to the UbiA prenyltransferase family. The cofactor is Mg(2+).

It localises to the membrane. It participates in secondary metabolite biosynthesis; terpenoid biosynthesis. Polyprenyl transferase; part of the gene cluster that mediates the biosynthesis of sesquiterpenyl epoxy-cyclohexenoids (SECs) such as anthrobotrisins and arthrosporols, metabolites that possess a novel hybrid carbon skeleton consisting of a polyketide-derived epoxycyclohexenol combined with a terpenoid-derived monocyclic sesquiterpenol substructure (PKS-PTS hybrid). The SEC pathway plays an important role for fungal soil colonization via decreasing fungal nematode-capturing ability. Within the pathway, the polyprenyl transferase catalyzes the farnesylation of toluquinol to yield farnesyl hydroquinone, the first hybrid precursor for biosynthesis of SECs, and farnesyl quinone (34) might be the key precursor for the epoxy ring formation. The pathway begins with the biosynthesis of 6-methylsalicylic acid (6-MSA), the first precursor of the polyketide-derived epoxycyclohexenol in arthrosporols, by the polyketide synthase (PKS) AOL_s00215g283 via condensation of 1 acetate and 3 malonate units. The 6-methylsalicylic acid decarboxylase AOL_s00215g281 then catalyzes the decarboxylation of 6-methylsalicylic acid to yield m-cresol. The cytochrome P450 monooxygenase AOL_s00215g282 further oxidizes m-cresol to yield toluquinol. With the assistance of the oxidoreductase AOL_s00215g277, the polyprenyl transferase AOL_s00215g276 catalyzes the farnesylation of toluquinol to produce farnesyl hydroquinone, the hybrid precursor for biosynthesis of SECs. Farnesyl hydroquinone undergoes epoxidation and then subsequent dehydrogenation to form farnesyl epoxy-quinone, the first and simplest SEC. The cytochrome P450 monooxygenase AOL_s00215g278 and the FAD-dependent monooxygenase AOL_s00215g279 might be involved in the oxygenation of the phenol moiety, most likely in the epoxy formation. The cytochrome P450 monooxygenases AOL_s00215g274 and AOL_s00215g280 are involved in specific regional ketone reductions at respectively C-4 and C-1 of farnesyl epoxy-quinone PubMed:33823587. This is Polyprenyl transferase AOL_s00215g276 from Arthrobotrys oligospora (strain ATCC 24927 / CBS 115.81 / DSM 1491) (Nematode-trapping fungus).